A 453-amino-acid chain; its full sequence is Ribosome biogenesis protein SSF2 (453 aa).

The segment covering 1–11 has biased composition (basic residues); it reads MAKRRQKKRTH. Disordered regions lie at residues 1–22, 275–327, and 373–453; these read MAKR…ERDI, KAKH…KAIK, and AKMR…SEVE. Residues 26 to 348 enclose the Brix domain; it reads MVIRVGQTSL…LVKIEDGICS (323 aa). Residues 373 to 398 show a composition bias toward basic and acidic residues; the sequence is AKMRLKEQRRKEQEENIAKKKAVKDA. Over residues 399-409 the composition is skewed to basic residues; that stretch reads KKQRKLERRKA. Acidic residues predominate over residues 440–453; the sequence is VPEDLDSDLFSEVE.

As to quaternary structure, part of a complex that includes BRX1, RPF1, RPF2 and SSF1 or SSF2.

It is found in the nucleus. The protein localises to the nucleolus. Functionally, required for biogenesis of the 60S ribosomal subunit. In Saccharomyces cerevisiae (strain ATCC 204508 / S288c) (Baker's yeast), this protein is Ribosome biogenesis protein SSF2 (SSF2).